The chain runs to 1063 residues: Unconventional myosin-Ic (1063 aa).

Methionine 1 carries the N-acetylmethionine modification. The Myosin motor domain occupies 47–731 (GVQDFVLLEN…TLFATEDALE (685 aa)). ATP contacts are provided by residues asparagine 88, tyrosine 96, 139-148 (SGESGAGKTE), and 192-196 (NDNSS). Lysine 383 is modified (N6-methyllysine). Residue serine 408 is modified to Phosphoserine. N6-acetyllysine is present on lysine 486. Residue serine 536 is modified to Phosphoserine. Positions 608-630 (LLELVEILKSKEPAYVRCIKPND) are actin-binding. IQ domains lie at 734–757 (RQSL…FLRV) and 758–786 (KRSA…AAQT). A phosphoserine mark is found at serine 864 and serine 1041. In terms of domain architecture, TH1 spans 885-1059 (KDNYPQSVPR…NGHLAVVAPR (175 aa)).

It belongs to the TRAFAC class myosin-kinesin ATPase superfamily. Myosin family. Interacts (via its IQ motifs) with CABP1 and CIB1; the interaction with CABP1 and CIB1 is calcium-dependent. Interacts (via tail domain) with PLEKHB1 (via PH domain); the interaction is not affected by the presence or absence of calcium and CALM. Interacts with POLR1A. Interacts with POLR2A. Component of the B-WICH complex, at least composed of SMARCA5/SNF2H, BAZ1B/WSTF, SF3B1, DEK, MYO1C, ERCC6, MYBBP1A and DDX21. Interacts (via its IQ motifs) with CALM; this precludes interaction with YWHAB. Interacts with YWHAB; this precludes interaction with CALM. Interacts with RPS6. Interacts with actin. Interacts with LLPH. Interacts with GLUT4. Interacts (via its IQ motifs) with SH3BGRL3; the interaction is dependent on calcium and takes place at membrane ruffles. Isoform 2 contains a N-acetylmethionine at position 1. Widely expressed.

It is found in the cytoplasm. It localises to the nucleus. The protein localises to the cell cortex. The protein resides in the cell projection. Its subcellular location is the ruffle membrane. It is found in the cytoplasmic vesicle. It localises to the stereocilium membrane. The protein localises to the nucleolus. The protein resides in the nucleoplasm. In terms of biological role, myosins are actin-based motor molecules with ATPase activity. Unconventional myosins serve in intracellular movements. Their highly divergent tails are presumed to bind to membranous compartments, which would be moved relative to actin filaments. Involved in glucose transporter recycling in response to insulin by regulating movement of intracellular GLUT4-containing vesicles to the plasma membrane. Component of the hair cell's (the sensory cells of the inner ear) adaptation-motor complex. Acts as a mediator of adaptation of mechanoelectrical transduction in stereocilia of vestibular hair cells. Binds phosphoinositides and links the actin cytoskeleton to cellular membranes. Functionally, isoform 3 is involved in regulation of transcription. Associated with transcriptional active ribosomal genes. Appears to cooperate with the WICH chromatin-remodeling complex to facilitate transcription. Necessary for the formation of the first phosphodiester bond during transcription initiation. The polypeptide is Unconventional myosin-Ic (MYO1C) (Bos taurus (Bovine)).